A 274-amino-acid chain; its full sequence is 4-deoxy-L-threo-5-hexosulose-uronate ketol-isomerase (274 aa).

Zn(2+) is bound by residues H192, H194, E199, and H241.

Belongs to the KduI family. Zn(2+) is required as a cofactor.

The catalysed reaction is 5-dehydro-4-deoxy-D-glucuronate = 3-deoxy-D-glycero-2,5-hexodiulosonate. Its pathway is glycan metabolism; pectin degradation; 2-dehydro-3-deoxy-D-gluconate from pectin: step 4/5. In terms of biological role, catalyzes the isomerization of 5-dehydro-4-deoxy-D-glucuronate to 3-deoxy-D-glycero-2,5-hexodiulosonate. This Cereibacter sphaeroides (strain ATCC 17025 / ATH 2.4.3) (Rhodobacter sphaeroides) protein is 4-deoxy-L-threo-5-hexosulose-uronate ketol-isomerase.